The primary structure comprises 148 residues: Probable glycine cleavage system H protein 2 (148 aa).

The 83-residue stretch at 32–114 (VIVVGITDIA…YGKGWLVKMK (83 aa)) folds into the Lipoyl-binding domain. Lys-73 bears the N6-lipoyllysine mark.

It belongs to the GcvH family. In terms of assembly, the glycine cleavage system is composed of four proteins: P, T, L and H. It depends on (R)-lipoate as a cofactor.

In terms of biological role, the glycine cleavage system catalyzes the degradation of glycine. The H protein shuttles the methylamine group of glycine from the P protein to the T protein. In Sulfurisphaera tokodaii (strain DSM 16993 / JCM 10545 / NBRC 100140 / 7) (Sulfolobus tokodaii), this protein is Probable glycine cleavage system H protein 2.